Reading from the N-terminus, the 191-residue chain is Thymidine kinase (191 aa).

ATP-binding positions include G9 to T16 and D85 to Q88. E86 functions as the Proton acceptor in the catalytic mechanism. Zn(2+)-binding residues include C143, C146, C181, and C184.

This sequence belongs to the thymidine kinase family. In terms of assembly, homotetramer.

It is found in the cytoplasm. The catalysed reaction is thymidine + ATP = dTMP + ADP + H(+). This chain is Thymidine kinase, found in Listeria monocytogenes serotype 4b (strain F2365).